The primary structure comprises 492 residues: Zinc finger protein 385B (492 aa).

2 consecutive Matrin-type zinc fingers follow at residues 8-44 (KKLL…VKQL) and 143-173 (ISCN…KLKA). Residues 159–206 (EAHYKGSKHAKKLKAQESPKNKQKSAVAQDSGTKTITSTSTNTTTTTT) form a disordered region. The segment covering 189-206 (SGTKTITSTSTNTTTTTT) has biased composition (low complexity). 2 consecutive Matrin-type zinc fingers follow at residues 303–337 (KKLL…LEAR) and 371–401 (FHCE…RVAG). Residues 388–420 (QHISSRRHKDRVAGKPTKPKYSPYNKQQRSSSS) form a disordered region.

The protein resides in the nucleus. Its function is as follows. May play a role in p53/TP53-mediated apoptosis. The sequence is that of Zinc finger protein 385B (znf385b) from Danio rerio (Zebrafish).